A 215-amino-acid chain; its full sequence is Proteasome subunit beta inpE (215 aa).

It belongs to the peptidase T1B family.

It localises to the cytoplasm. The protein localises to the nucleus. The catalysed reaction is Cleavage of peptide bonds with very broad specificity.. In terms of biological role, proteasome subunit beta type-6; part of the inp gene cluster that mediates the biosynthesis of fellutamide B, a mycotoxin that acts as a proteasome inhibitor. In the first step of fellutabmide B biosynthesis inpC activates 3-hydroxydodecanoic acid to generate 3-hydroxydodecanoyl-AMP that is then loaded onto the T0 domain of inpB. The 3-hydroxydodecanoyl-S-phosphopantetheinyl-T0 is sequentially extended with L-Asn and L-Gln by the two CAT modules of inpB. The linear lipodipeptide from inpB is then transferred onto inpA for the addition of the third amino acid, L-Leu. Reductive releasing of the lipotripeptide by the TE domain of inpA produces (2S)-fellutamide B. InpF might be involved in the release and transfer of the lipodipeptide from inpB to inpA. The inp cluster-encoded proteasome subunit inpE confers resistance to internally produced fellutamides. The MFS efflux transporter inpD may contribute to fellutamide resistance as well. In Emericella nidulans (strain FGSC A4 / ATCC 38163 / CBS 112.46 / NRRL 194 / M139) (Aspergillus nidulans), this protein is Proteasome subunit beta inpE (inpE).